Reading from the N-terminus, the 287-residue chain is Protein REVEILLE 2 (287 aa).

In terms of domain architecture, HTH myb-type spans 31 to 85; sequence TITKQREKWTEAEHEKFVEALKLYGRAWRRIEEHVGTKTAVQIRSHAQKFFTKVA. A DNA-binding region (H-T-H motif) is located at residues 58–81; sequence WRRIEEHVGTKTAVQIRSHAQKFF. The tract at residues 134–177 is disordered; the sequence is QDEDNRSPTSVLSAHGSDGLGSIGSNSPNSSSAELSSHTEESLS. Over residues 156-169 the composition is skewed to low complexity; sequence IGSNSPNSSSAELS.

The protein resides in the nucleus. Functionally, positive regulator for cold-responsive gene expression and cold tolerance. Part of a regulatory feedback loop that controls a subset of the circadian outputs and modulates the central oscillator. Negatively self-regulates its own expression. This is Protein REVEILLE 2 (RVE2) from Arabidopsis thaliana (Mouse-ear cress).